We begin with the raw amino-acid sequence, 235 residues long: uncharacterized protein (235 aa).

This is an uncharacterized protein from Bacillus subtilis (strain 168).